A 466-amino-acid polypeptide reads, in one-letter code: UDP-N-acetylmuramate--L-alanine ligase (466 aa).

119 to 125 (GTHGKTT) lines the ATP pocket.

The protein belongs to the MurCDEF family.

The protein resides in the cytoplasm. The enzyme catalyses UDP-N-acetyl-alpha-D-muramate + L-alanine + ATP = UDP-N-acetyl-alpha-D-muramoyl-L-alanine + ADP + phosphate + H(+). It participates in cell wall biogenesis; peptidoglycan biosynthesis. Functionally, cell wall formation. The chain is UDP-N-acetylmuramate--L-alanine ligase from Cytophaga hutchinsonii (strain ATCC 33406 / DSM 1761 / CIP 103989 / NBRC 15051 / NCIMB 9469 / D465).